Reading from the N-terminus, the 157-residue chain is MRAVIQRVSEASVTVDGRVIGAIGRGLLILLGVGVGDTEAEAKLLAEKSANLRIFADDEGRFNRSLLDIGGEALVVSQFTLYADTRRGRRPSFSDAAPPEIAAPLVEAFANELQRLGIAVGAGQFGAMMQVALVNDGPVTILLDSAIFREPRNRHER.

Positions 137–138 (GP) match the Gly-cisPro motif, important for rejection of L-amino acids motif.

This sequence belongs to the DTD family. In terms of assembly, homodimer.

Its subcellular location is the cytoplasm. The enzyme catalyses glycyl-tRNA(Ala) + H2O = tRNA(Ala) + glycine + H(+). It catalyses the reaction a D-aminoacyl-tRNA + H2O = a tRNA + a D-alpha-amino acid + H(+). An aminoacyl-tRNA editing enzyme that deacylates mischarged D-aminoacyl-tRNAs. Also deacylates mischarged glycyl-tRNA(Ala), protecting cells against glycine mischarging by AlaRS. Acts via tRNA-based rather than protein-based catalysis; rejects L-amino acids rather than detecting D-amino acids in the active site. By recycling D-aminoacyl-tRNA to D-amino acids and free tRNA molecules, this enzyme counteracts the toxicity associated with the formation of D-aminoacyl-tRNA entities in vivo and helps enforce protein L-homochirality. The polypeptide is D-aminoacyl-tRNA deacylase (Roseiflexus castenholzii (strain DSM 13941 / HLO8)).